Here is a 101-residue protein sequence, read N- to C-terminus: NAD(P)H-quinone oxidoreductase subunit 4L, chloroplastic (101 aa).

3 helical membrane passes run 2–22 (MLEH…YGLI), 32–52 (MCLE…SDFF), and 61–81 (IFSI…PAIV).

This sequence belongs to the complex I subunit 4L family. As to quaternary structure, NDH is composed of at least 16 different subunits, 5 of which are encoded in the nucleus.

The protein resides in the plastid. It is found in the chloroplast thylakoid membrane. The enzyme catalyses a plastoquinone + NADH + (n+1) H(+)(in) = a plastoquinol + NAD(+) + n H(+)(out). It catalyses the reaction a plastoquinone + NADPH + (n+1) H(+)(in) = a plastoquinol + NADP(+) + n H(+)(out). In terms of biological role, NDH shuttles electrons from NAD(P)H:plastoquinone, via FMN and iron-sulfur (Fe-S) centers, to quinones in the photosynthetic chain and possibly in a chloroplast respiratory chain. The immediate electron acceptor for the enzyme in this species is believed to be plastoquinone. Couples the redox reaction to proton translocation, and thus conserves the redox energy in a proton gradient. The polypeptide is NAD(P)H-quinone oxidoreductase subunit 4L, chloroplastic (Lotus japonicus (Lotus corniculatus var. japonicus)).